A 114-amino-acid polypeptide reads, in one-letter code: Methylamine utilization protein MauL (114 aa).

Its pathway is one-carbon metabolism; methylamine degradation. Functionally, probably involved in TTQ prosthetic group biosynthesis. This Methylorubrum extorquens (strain ATCC 14718 / DSM 1338 / JCM 2805 / NCIMB 9133 / AM1) (Methylobacterium extorquens) protein is Methylamine utilization protein MauL (mauL).